The sequence spans 761 residues: MTSHLDDEGLHPMVSTLLGGGTLPTVPFKAYTRERMMELRTTKASMTRPENLSEDFNGEDGKFSPLKWLEHRWEIEGIKNRPMSKKIDSLCAGADENTGLSPQRRAFSSGCKAPTDDKGRDGEYERLGGHGKNWRNGSTGGADKFASRGNDFKPSFQKGNQLERGTRGAEWKKDTTRGAKFAPRREERLTSLSGSEKLPEWADGPTTMDDMIELRGFDEPKKVKNKKNPKEKKEKEAVKAPEPVECVGSRPSSTGLKTSEPIDDPAIAYSSSGGGALPATDQELAALLGCLDIQKTSRKIDGDDMAWAHKSEETAGGTSRLSRFFAKKNKSPELDAMLSSVGGGNDENVANPMLARLFGHSGGDNNASSSGAGDIKGGMRLEDLEKGMESKEPSKVSPLQDPSQQAQLLQHLQKFAKQQAESGQHIHHHRQPTPPNGGPQHQQHLHHPMVHPGMQIIADPSLLASFAQNPVILNAYVENQLQEAVNAAIRANNGQQLPPQLHEQLRMASMRNKAFLQSQTLTFVSLQQQHQNIQQHQQQQQHHQHKGRTPAMIPASVQRQLQKSSSNADQKKEKTSQSPPESNQETSDAHNQSDAMNQLKKLHMQQNYANMVQAMNSGVGWARGNGVVNGQQQHPQQQLPPNVQMLMAQHQQAQMQHLKMMMSRAQQQHMLMAKIAQMQQQQAQMANMQERQGPSHNQQQHQPVVPSELSQVGPIQTPLEKLLASVGVQGSQFTGSGDRIPSSVRPMSLEDLEKQLTAVPK.

Disordered stretches follow at residues 101 to 274, 386 to 446, 557 to 592, 681 to 702, and 730 to 761; these read SPQR…SSGG, KGME…QHLH, VQRQ…AHNQ, QQAQ…QQHQ, and GSQF…AVPK. 3 stretches are compositionally biased toward basic and acidic residues: residues 114–128, 164–189, and 212–222; these read PTDD…ERLG, RGTR…EERL, and IELRGFDEPKK. 4 stretches are compositionally biased toward polar residues: residues 400–410, 557–568, 576–592, and 690–702; these read QDPSQQAQLLQ, VQRQLQKSSSNA, SQSP…AHNQ, and ERQG…QQHQ.

As to quaternary structure, interacts with cgh-1. Interacts with ife-1 and oma-1. In the embryo, significantly enriched in the germ cell lineage.

Its subcellular location is the cytoplasm. Involved in translational repression of multiple mRNAs in the distal gonad. Recruited to the 3' untranslated region (UTR) of zif-1 by oma-1 and is required for translational repression of zif-1. May also be involved in translational repression of mei-1 through recruitment to the mei-1 3' UTR by oma-1. Required for oogenesis but not spermatogenesis, for P granule formation and for the localization of car-1 and cgh-1 to P granules. Required for normal spindle orientation in early embryos. In Caenorhabditis elegans, this protein is Translational repressor ifet-1.